The chain runs to 387 residues: Phosphoglycerate kinase (387 aa).

Residues 21–23 (DLN), R36, 59–62 (HLGR), R113, and R146 contribute to the substrate site. ATP-binding positions include K197, E314, and 340-343 (GGDT).

The protein belongs to the phosphoglycerate kinase family. As to quaternary structure, monomer.

The protein localises to the cytoplasm. It catalyses the reaction (2R)-3-phosphoglycerate + ATP = (2R)-3-phospho-glyceroyl phosphate + ADP. It participates in carbohydrate degradation; glycolysis; pyruvate from D-glyceraldehyde 3-phosphate: step 2/5. The protein is Phosphoglycerate kinase of Salmonella schwarzengrund (strain CVM19633).